The following is an 815-amino-acid chain: Ataxin-1 (815 aa).

Residues methionine 1–glutamate 41 show a composition bias toward basic and acidic residues. Residues methionine 1 to alanine 63 form a disordered region. A Glycyl lysine isopeptide (Lys-Gly) (interchain with G-Cter in SUMO) cross-link involves residue lysine 16. The segment covering asparagine 49 to glycine 61 has biased composition (gly residues). Residues serine 82 and serine 88 each carry the phosphoserine modification. 3 disordered regions span residues glycine 185–leucine 270, glutamate 329–proline 355, and valine 397–arginine 424. Residue lysine 194 forms a Glycyl lysine isopeptide (Lys-Gly) (interchain with G-Cter in SUMO) linkage. Low complexity predominate over residues glutamine 197–histidine 226. A phosphoserine mark is found at serine 238 and serine 253. The span at glutamine 243–threonine 260 shows a compositional bias: polar residues. Residues valine 494–isoleucine 604 are self-association. The interaction with USP7 stretch occupies residues leucine 538–lysine 815. The interval threonine 540–proline 766 is RNA-binding. An AXH domain is found at serine 562–glycine 693. Residues lysine 609, lysine 696, and lysine 745 each participate in a glycyl lysine isopeptide (Lys-Gly) (interchain with G-Cter in SUMO) cross-link. A disordered region spans residues glutamate 762 to leucine 798. Serine 775 carries the post-translational modification Phosphoserine. A Nuclear localization signal motif is present at residues proline 794–serine 797.

The protein belongs to the ATXN1 family. As to quaternary structure, homooligomer. Interacts with CIC. Interacts with ANP32A, PQBP1, UBQLN4, ATXN1L and USP7. Directly interacts with RBPJ; this interaction is disrupted in the presence of Notch intracellular domain. Competes with ATXN1L for RBPJ-binding. Found in a complex with CIC and ATXN1L. In terms of processing, ubiquitinated by UBE3A, leading to its degradation by the proteasome. The presence of expanded poly-Gln repeats in spinocerebellar ataxia 1 (SCA1) patients impairs ubiquitination and degradation, leading to accumulation of ATXN1 in neurons and subsequent toxicity. Post-translationally, phosphorylation at Ser-775 increases the pathogenicity of proteins with an expanded polyglutamine tract. Sumoylation is dependent on nuclear localization and phosphorylation at Ser-775. It is reduced in the presence of an expanded polyglutamine tract. Widely expressed throughout the body.

The protein localises to the cytoplasm. It localises to the nucleus. Its function is as follows. Chromatin-binding factor that repress Notch signaling in the absence of Notch intracellular domain by acting as a CBF1 corepressor. Binds to the HEY promoter and might assist, along with NCOR2, RBPJ-mediated repression. Binds RNA in vitro. May be involved in RNA metabolism. In concert with CIC and ATXN1L, involved in brain development. The chain is Ataxin-1 (ATXN1) from Homo sapiens (Human).